Here is a 546-residue protein sequence, read N- to C-terminus: Probable protein kinase UbiB (546 aa).

Positions 124–502 constitute a Protein kinase domain; the sequence is DFSVEPLASA…HVRQGQSRYL (379 aa). Residues 130–138 and K153 each bind ATP; that span reads LASASIAQV. D288 (proton acceptor) is an active-site residue. The next 2 helical transmembrane spans lie at 501–521 and 522–542; these read YLFGIGAVLLLSGTLLFIHRP and EWGMMPGWLMAGGVVTWLIGW.

It belongs to the ABC1 family. UbiB subfamily.

Its subcellular location is the cell inner membrane. It functions in the pathway cofactor biosynthesis; ubiquinone biosynthesis [regulation]. Its function is as follows. Is probably a protein kinase regulator of UbiI activity which is involved in aerobic coenzyme Q (ubiquinone) biosynthesis. The polypeptide is Probable protein kinase UbiB (Klebsiella pneumoniae subsp. pneumoniae (strain ATCC 700721 / MGH 78578)).